Consider the following 664-residue polypeptide: Macoilin (664 aa).

A run of 4 helical transmembrane segments spans residues 28–48 (TFLYLKFLVVWALVLLADFVL), 75–95 (AFSVFFVCVAFTSNIICLLFI), 120–140 (VCLPTVSLWILFVYIEAAIRF), and 154–174 (FAAHCIGYPVVTLGFGFKSYV). A compositionally biased stretch (basic and acidic residues) spans 253–265 (REKGKEKDKDAKK). The segment at 253–274 (REKGKEKDKDAKKHNLGINNNN) is disordered. Serine 305 is modified (phosphoserine). The span at 320–348 (KNYKNASGVVNSSPRSHSATNGSIPSSSS) shows a compositional bias: polar residues. The disordered stretch occupies residues 320 to 367 (KNYKNASGVVNSSPRSHSATNGSIPSSSSKNEKKQKCTSKSPSAHKDL). The N-linked (GlcNAc...) asparagine glycan is linked to asparagine 324. Phosphoserine is present on serine 332. Asparagine 340 and asparagine 452 each carry an N-linked (GlcNAc...) asparagine glycan. 2 positions are modified to phosphoserine: serine 631 and serine 634. Positions 631–664 (SPLSPVSPHYSSKFVETSPSGLDPNASVYQPLKK) are disordered. A glycan (N-linked (GlcNAc...) asparagine) is linked at asparagine 655.

Belongs to the macoilin family.

It is found in the rough endoplasmic reticulum membrane. The protein resides in the nucleus membrane. Plays a role in the regulation of neuronal activity. This Bos taurus (Bovine) protein is Macoilin (MACO1).